The chain runs to 983 residues: Protein CLASP-3 (983 aa).

Disordered stretches follow at residues 356-393 and 666-690; these read YPNR…TQKA and SNNI…QKES. The segment covering 359–372 has biased composition (low complexity); the sequence is RPGSRTRTSSITST. One copy of the HEAT repeat lies at 918 to 956; the sequence is ITPTIIKAYQSTSSTVRKTVVYCLVAMVNRVGEQRMTPH.

This sequence belongs to the CLASP family.

It localises to the cytoplasm. It is found in the cytoskeleton. Its function is as follows. Microtubule plus-end tracking protein that promotes the stabilization of dynamic microtubules. The polypeptide is Protein CLASP-3 (cls-3) (Caenorhabditis elegans).